A 178-amino-acid chain; its full sequence is Pyruvate synthase subunit PorC (178 aa).

As to quaternary structure, heterotetramer of one alpha, one beta, one delta and one gamma chain.

The catalysed reaction is 2 oxidized [2Fe-2S]-[ferredoxin] + pyruvate + CoA = 2 reduced [2Fe-2S]-[ferredoxin] + acetyl-CoA + CO2 + H(+). This Methanocaldococcus jannaschii (strain ATCC 43067 / DSM 2661 / JAL-1 / JCM 10045 / NBRC 100440) (Methanococcus jannaschii) protein is Pyruvate synthase subunit PorC (porC).